A 487-amino-acid polypeptide reads, in one-letter code: MKPSTEWWRYLAPLAVIAIIALLPVPAGLENHTWLYFAVFTGVIVGLILEPVPGAVVAMVGISIIAILSPWLLFSPEQLAQPGFKFTAKSLSWAVSGFSNSVIWLIFAAFMFGTGYEKTGLGRRIALILVKKMGHRTLFLGYAVMFSELILAPVTPSNSARGAGIIYPIIRNLPPLYQSQPNDSSSRSIGSYIMWMGIVADCVTSAIFLTAMAPNLLLIGLMKSASHATLSWGDWFLGMLPLSILLVLLVPWLAYVLYPPVLKSGDQVPRWAETELQAMGPLCSREKRMLGLMVGALVLWIFGGDYIDAAMVGYSVVALMLLLRIISWDDIVSNKAAWNVFFWLASLITLATGLNNTGFISWFGKLLAGSLSGYSPTMVMVALIVVFYLLRYFFASATAYTSALAPMMIAAALAMPEIPLPVFCLMVGAAIGLGSILTPYATGPSPIYYGSGYLPTADYWRLGAIFGLIFLVLLVITGLLWMPVVLL.

Over 1-9 (MKPSTEWWR) the chain is Periplasmic. Residues 10–30 (YLAPLAVIAIIALLPVPAGLE) form a helical membrane-spanning segment. Topologically, residues 31-32 (NH) are cytoplasmic. The next 2 membrane-spanning stretches (helical) occupy residues 33 to 53 (TWLY…EPVP) and 54 to 74 (GAVV…WLLF). Topologically, residues 75–92 (SPEQLAQPGFKFTAKSLS) are cytoplasmic. The helical transmembrane segment at 93–113 (WAVSGFSNSVIWLIFAAFMFG) threads the bilayer. Topologically, residues 114-136 (TGYEKTGLGRRIALILVKKMGHR) are periplasmic. The helical transmembrane segment at 137-157 (TLFLGYAVMFSELILAPVTPS) threads the bilayer. Residues 158–188 (NSARGAGIIYPIIRNLPPLYQSQPNDSSSRS) are Cytoplasmic-facing. Residues 189–209 (IGSYIMWMGIVADCVTSAIFL) traverse the membrane as a helical segment. Residues 210–235 (TAMAPNLLLIGLMKSASHATLSWGDW) are Periplasmic-facing. The chain crosses the membrane as a helical span at residues 236-256 (FLGMLPLSILLVLLVPWLAYV). The Cytoplasmic segment spans residues 257–291 (LYPPVLKSGDQVPRWAETELQAMGPLCSREKRMLG). Transmembrane regions (helical) follow at residues 292–312 (LMVG…AAMV) and 313–333 (GYSV…DIVS). At 334–339 (NKAAWN) the chain is on the cytoplasmic side. A helical transmembrane segment spans residues 340-360 (VFFWLASLITLATGLNNTGFI). Topologically, residues 361–369 (SWFGKLLAG) are periplasmic. Residues 370 to 390 (SLSGYSPTMVMVALIVVFYLL) form a helical membrane-spanning segment. Over 391-392 (RY) the chain is Cytoplasmic. A helical transmembrane segment spans residues 393-413 (FFASATAYTSALAPMMIAAAL). Residues 414–417 (AMPE) are Periplasmic-facing. The chain crosses the membrane as a helical span at residues 418–438 (IPLPVFCLMVGAAIGLGSILT). Residues 439 to 464 (PYATGPSPIYYGSGYLPTADYWRLGA) are Cytoplasmic-facing. A helical transmembrane segment spans residues 465 to 485 (IFGLIFLVLLVITGLLWMPVV). At 486–487 (LL) the chain is on the periplasmic side.

It belongs to the SLC13A/DASS transporter (TC 2.A.47) family. DIT1 subfamily.

It localises to the cell inner membrane. The catalysed reaction is (2R,3R)-tartrate(out) + succinate(in) = (2R,3R)-tartrate(in) + succinate(out). Catalyzes the uptake of tartrate in exchange for intracellular succinate. Essential for anaerobic L-tartrate fermentation. The chain is L-tartrate/succinate antiporter from Escherichia coli (strain K12).